A 323-amino-acid chain; its full sequence is Aldo-keto reductase family 1 member C4 (323 aa).

Residues 20-24 (GFGTY) and D50 each bind NADP(+). Catalysis depends on Y55, which acts as the Proton donor. Residue H117 participates in substrate binding. NADP(+) contacts are provided by residues 166 to 167 (SN), Q190, 216 to 221 (HSALGT), and 270 to 280 (KSYNEQRIREN).

It belongs to the aldo/keto reductase family. Monomer. The N-terminus is blocked. In terms of tissue distribution, liver specific.

Its subcellular location is the cytoplasm. The protein localises to the cytosol. It carries out the reaction a 3alpha-hydroxysteroid + NADP(+) = a 3-oxosteroid + NADPH + H(+). The catalysed reaction is a 3alpha-hydroxysteroid + NAD(+) = a 3-oxosteroid + NADH + H(+). The enzyme catalyses 5alpha-androstane-3alpha,17beta-diol + NADP(+) = 17beta-hydroxy-5alpha-androstan-3-one + NADPH + H(+). It catalyses the reaction 5alpha-androstane-3beta,17beta-diol + NADP(+) = 17beta-hydroxy-5alpha-androstan-3-one + NADPH + H(+). It carries out the reaction 5alpha-androstane-3alpha,17beta-diol + NAD(+) = 17beta-hydroxy-5alpha-androstan-3-one + NADH + H(+). The catalysed reaction is 17beta-estradiol + NADP(+) = estrone + NADPH + H(+). The enzyme catalyses 17beta-estradiol + NAD(+) = estrone + NADH + H(+). It catalyses the reaction (20S)-hydroxypregn-4-en-3-one + NADP(+) = progesterone + NADPH + H(+). It carries out the reaction (20S)-hydroxypregn-4-en-3-one + NAD(+) = progesterone + NADH + H(+). The catalysed reaction is androsterone + NADP(+) = 5alpha-androstan-3,17-dione + NADPH + H(+). The enzyme catalyses testosterone + NADP(+) = androst-4-ene-3,17-dione + NADPH + H(+). It catalyses the reaction testosterone + NAD(+) = androst-4-ene-3,17-dione + NADH + H(+). It carries out the reaction 3alpha-hydroxy-5alpha-androstane 17-O-(beta-D-glucuronate) + NADP(+) = 5alpha-dihydrotestosterone 17-O-(beta-D-glucuronate) + NADPH + H(+). The catalysed reaction is (3beta,5alpha,17beta)-3-hydroxy-androstan-17-yl sulfate + NADP(+) = 5alpha-dihydrotestosterone sulfate + NADPH + H(+). The enzyme catalyses 5alpha-androstane-3alpha,17beta-diol + NAD(+) = androsterone + NADH + H(+). It catalyses the reaction chlordecone alcohol + NADP(+) = chlordecone + NADPH + H(+). Its pathway is steroid metabolism. Inhibited by nonsteroidal the anti-inflammatory drugs (NSAID) flufenamic. The oxidation reaction is inhibited by low micromolar concentrations of NADPH. Its function is as follows. Cytosolic aldo-keto reductase that catalyzes the NADH and NADPH-dependent reduction of ketosteroids to hydroxysteroids. Liver specific enzyme that acts as an NAD(P)(H)-dependent 3-, 17- and 20-ketosteroid reductase on the steroid nucleus and side chain. Displays the ability to catalyze both oxidation and reduction in vitro, but most probably acts as a reductase in vivo since the oxidase activity measured in vitro is inhibited by physiological concentration of NADPH. Acts preferentially as a 3-alpha-hydroxysteroid dehydrogenase (HSD) with a subsidiary 3-beta-HSD activity. Catalyzes efficiently the transformation of the potent androgen 5-alpha-dihydrotestosterone (5alpha-DHT or 17beta-hydroxy-5alpha-androstan-3-one) into the less active form, 5-alpha-androstan-3-alpha,17-beta-diol (3-alpha-diol). Catalyzes the reduction of estrone into 17beta-estradiol but with low efficiency. Metabolizes a broad spectrum of natural and synthetic therapeutic steroid and plays an important role in metabolism of androgens, estrogens, progestereone and conjugated steroids. Catalyzes the biotransformation of the pesticide chlordecone (kepone) to its corresponding alcohol leading to increased biliary excretion of the pesticide and concomitant reduction of its neurotoxicity since bile is the major excretory route. The chain is Aldo-keto reductase family 1 member C4 (AKR1C4) from Homo sapiens (Human).